Here is a 284-residue protein sequence, read N- to C-terminus: uncharacterized protein (284 aa).

The helical transmembrane segment at 9–28 threads the bilayer; it reads IILRWVVTLYIYGFILYQIT.

It localises to the membrane. This is an uncharacterized protein from Aquifex aeolicus (strain VF5).